A 167-amino-acid polypeptide reads, in one-letter code: Putative C-type lectin protein FPV008/FPV253 (167 aa).

Residues 49-152 (CPDEWIGYNS…SCIFHERTIC (104 aa)) form the C-type lectin domain. 2 disulfides stabilise this stretch: Cys-77–Cys-152 and Cys-131–Cys-144.

This Vertebrata (FPV) protein is Putative C-type lectin protein FPV008/FPV253.